The sequence spans 284 residues: L-ribulose-5-phosphate 3-epimerase UlaE (284 aa).

Belongs to the L-ribulose-5-phosphate 3-epimerase family.

The enzyme catalyses L-ribulose 5-phosphate = L-xylulose 5-phosphate. It functions in the pathway cofactor degradation; L-ascorbate degradation; D-xylulose 5-phosphate from L-ascorbate: step 3/4. Catalyzes the isomerization of L-xylulose-5-phosphate to L-ribulose-5-phosphate. Is involved in the anaerobic L-ascorbate utilization. The sequence is that of L-ribulose-5-phosphate 3-epimerase UlaE from Escherichia coli (strain 55989 / EAEC).